A 322-amino-acid polypeptide reads, in one-letter code: Large ribosomal subunit protein uL10 (322 aa).

A disordered region spans residues 294-322 (APAAAAKAEKEEEPAEESDDEMGFGLFDE). Acidic residues predominate over residues 304 to 322 (EEEPAEESDDEMGFGLFDE).

The protein belongs to the universal ribosomal protein uL10 family. In terms of assembly, P0 forms a pentameric complex by interaction with dimers of P1 and P2. In terms of processing, phosphorylated.

In terms of biological role, ribosomal protein P0 is the functional equivalent of E.coli protein L10. This chain is Large ribosomal subunit protein uL10, found in Lupinus luteus (European yellow lupine).